A 410-amino-acid chain; its full sequence is Interstrand DNA cross-link repair glycosylase (410 aa).

Positions 45–47 (QID) match the QXD; important for activity motif.

The protein belongs to the DNA glycosylase AlkZ-like family.

In terms of biological role, DNA glycosylase involved in the repair of interstrand DNA cross-links (ICLs), which are highly toxic DNA lesions that covalently tether the opposing strands of DNA, thereby inhibiting essential cellular processes such as DNA replication and transcription. Acts by unhooking both sides of the ICLs, forming abasic (AP) sites on both strands. Unhooks ICLs derived from various cross-linking agents, including azinomycin B (AZB) and mechlorethamine, also known as nitrogen mustard (NM), protecting cells from the toxicity of these cross-linking agents. In vitro, also acts on monoadducts and can catalyze the excision of N7-methylguanine (7mGua) from an oligonucleotide containing N7-methyldeoxyguanosine (d7mG). Shows no unhooking activity toward FaPy-ICLs. In Escherichia coli (strain K12), this protein is Interstrand DNA cross-link repair glycosylase (ycaQ).